The primary structure comprises 557 residues: Dihydroxy-acid dehydratase (557 aa).

Residue D78 participates in Mg(2+) binding. C119 is a [2Fe-2S] cluster binding site. Mg(2+) is bound by residues D120 and K121. An N6-carboxylysine modification is found at K121. Residue C192 participates in [2Fe-2S] cluster binding. E446 contributes to the Mg(2+) binding site. S472 functions as the Proton acceptor in the catalytic mechanism.

This sequence belongs to the IlvD/Edd family. As to quaternary structure, homodimer. [2Fe-2S] cluster serves as cofactor. It depends on Mg(2+) as a cofactor.

The enzyme catalyses (2R)-2,3-dihydroxy-3-methylbutanoate = 3-methyl-2-oxobutanoate + H2O. The catalysed reaction is (2R,3R)-2,3-dihydroxy-3-methylpentanoate = (S)-3-methyl-2-oxopentanoate + H2O. It participates in amino-acid biosynthesis; L-isoleucine biosynthesis; L-isoleucine from 2-oxobutanoate: step 3/4. The protein operates within amino-acid biosynthesis; L-valine biosynthesis; L-valine from pyruvate: step 3/4. Functions in the biosynthesis of branched-chain amino acids. Catalyzes the dehydration of (2R,3R)-2,3-dihydroxy-3-methylpentanoate (2,3-dihydroxy-3-methylvalerate) into 2-oxo-3-methylpentanoate (2-oxo-3-methylvalerate) and of (2R)-2,3-dihydroxy-3-methylbutanoate (2,3-dihydroxyisovalerate) into 2-oxo-3-methylbutanoate (2-oxoisovalerate), the penultimate precursor to L-isoleucine and L-valine, respectively. This is Dihydroxy-acid dehydratase from Campylobacter curvus (strain 525.92).